A 502-amino-acid chain; its full sequence is ATP synthase subunit alpha, sodium ion specific (502 aa).

169 to 176 (GDRQTGKT) serves as a coordination point for ATP.

This sequence belongs to the ATPase alpha/beta chains family. F-type ATPases have 2 components, CF(1) - the catalytic core - and CF(0) - the membrane proton channel. CF(1) has five subunits: alpha(3), beta(3), gamma(1), delta(1), epsilon(1). CF(0) has three main subunits: a, b and c.

The protein resides in the cell membrane. The catalysed reaction is 4 Na(+)(in) + ATP + H2O = 4 Na(+)(out) + ADP + phosphate + H(+). Its activity is regulated as follows. Inhibited by nitrate. Produces ATP from ADP in the presence of a sodium ion gradient across the membrane. The alpha chain is a regulatory subunit. This is ATP synthase subunit alpha, sodium ion specific from Acetobacterium woodii (strain ATCC 29683 / DSM 1030 / JCM 2381 / KCTC 1655 / WB1).